Reading from the N-terminus, the 251-residue chain is tRNA-cytidine(32) 2-sulfurtransferase 2 (251 aa).

The short motif at 33 to 38 is the PP-loop motif element; it reads SGGKDS. The [4Fe-4S] cluster site is built by Cys108, Cys111, and Cys199.

This sequence belongs to the TtcA family. In terms of assembly, homodimer. Mg(2+) serves as cofactor. Requires [4Fe-4S] cluster as cofactor.

Its subcellular location is the cytoplasm. It carries out the reaction cytidine(32) in tRNA + S-sulfanyl-L-cysteinyl-[cysteine desulfurase] + AH2 + ATP = 2-thiocytidine(32) in tRNA + L-cysteinyl-[cysteine desulfurase] + A + AMP + diphosphate + H(+). It participates in tRNA modification. Functionally, catalyzes the ATP-dependent 2-thiolation of cytidine in position 32 of tRNA, to form 2-thiocytidine (s(2)C32). The sulfur atoms are provided by the cysteine/cysteine desulfurase (IscS) system. This chain is tRNA-cytidine(32) 2-sulfurtransferase 2, found in Francisella tularensis subsp. tularensis (strain WY96-3418).